A 298-amino-acid chain; its full sequence is Lipoyl synthase (298 aa).

7 residues coordinate [4Fe-4S] cluster: C40, C45, C51, C67, C71, C74, and S280. One can recognise a Radical SAM core domain in the interval 53–269 (AVRRTATFMI…KEIALSKGFS (217 aa)).

Belongs to the radical SAM superfamily. Lipoyl synthase family. [4Fe-4S] cluster is required as a cofactor.

It is found in the cytoplasm. The catalysed reaction is [[Fe-S] cluster scaffold protein carrying a second [4Fe-4S](2+) cluster] + N(6)-octanoyl-L-lysyl-[protein] + 2 oxidized [2Fe-2S]-[ferredoxin] + 2 S-adenosyl-L-methionine + 4 H(+) = [[Fe-S] cluster scaffold protein] + N(6)-[(R)-dihydrolipoyl]-L-lysyl-[protein] + 4 Fe(3+) + 2 hydrogen sulfide + 2 5'-deoxyadenosine + 2 L-methionine + 2 reduced [2Fe-2S]-[ferredoxin]. Its pathway is protein modification; protein lipoylation via endogenous pathway; protein N(6)-(lipoyl)lysine from octanoyl-[acyl-carrier-protein]. Catalyzes the radical-mediated insertion of two sulfur atoms into the C-6 and C-8 positions of the octanoyl moiety bound to the lipoyl domains of lipoate-dependent enzymes, thereby converting the octanoylated domains into lipoylated derivatives. The sequence is that of Lipoyl synthase from Geobacillus thermodenitrificans (strain NG80-2).